We begin with the raw amino-acid sequence, 396 residues long: Phosphoglycerate kinase (396 aa).

Substrate is bound by residues 20 to 22 (DIN), R35, 58 to 61 (HQGR), R115, and R155. ATP contacts are provided by residues E328 and 353-356 (GGDT).

The protein belongs to the phosphoglycerate kinase family. As to quaternary structure, monomer.

It is found in the cytoplasm. It catalyses the reaction (2R)-3-phosphoglycerate + ATP = (2R)-3-phospho-glyceroyl phosphate + ADP. Its pathway is carbohydrate degradation; glycolysis; pyruvate from D-glyceraldehyde 3-phosphate: step 2/5. This Natronomonas pharaonis (strain ATCC 35678 / DSM 2160 / CIP 103997 / JCM 8858 / NBRC 14720 / NCIMB 2260 / Gabara) (Halobacterium pharaonis) protein is Phosphoglycerate kinase.